We begin with the raw amino-acid sequence, 341 residues long: Aspartate carbamoyltransferase catalytic subunit (341 aa).

Positions 89 and 90 each coordinate carbamoyl phosphate. Lys-117 contributes to the L-aspartate binding site. Carbamoyl phosphate is bound by residues Arg-139, His-169, and Gln-172. Positions 202 and 257 each coordinate L-aspartate. Carbamoyl phosphate contacts are provided by Gly-298 and Pro-299.

The protein belongs to the aspartate/ornithine carbamoyltransferase superfamily. ATCase family. In terms of assembly, heterododecamer (2C3:3R2) of six catalytic PyrB chains organized as two trimers (C3), and six regulatory PyrI chains organized as three dimers (R2).

It carries out the reaction carbamoyl phosphate + L-aspartate = N-carbamoyl-L-aspartate + phosphate + H(+). It participates in pyrimidine metabolism; UMP biosynthesis via de novo pathway; (S)-dihydroorotate from bicarbonate: step 2/3. Functionally, catalyzes the condensation of carbamoyl phosphate and aspartate to form carbamoyl aspartate and inorganic phosphate, the committed step in the de novo pyrimidine nucleotide biosynthesis pathway. This is Aspartate carbamoyltransferase catalytic subunit from Paraburkholderia phytofirmans (strain DSM 17436 / LMG 22146 / PsJN) (Burkholderia phytofirmans).